Consider the following 99-residue polypeptide: Fetal and adult testis-expressed transcript protein homolog (99 aa).

Residues 79–98 (AALFTLLVSVCIANLWLWVH) traverse the membrane as a helical segment.

In terms of assembly, interacts with BIK and RNF183. Interacts with IMMT/MIC60and EMD.

The protein resides in the mitochondrion. It localises to the mitochondrion outer membrane. The protein localises to the endoplasmic reticulum membrane. Functionally, involved in the regulation of endoplasmic reticulum (ER)-mitochondria coupling. Negatively regulates the ER-mitochondria distance and Ca(2+) transfer from ER to mitochondria possibly implicating it in the regulation of apoptosis. May collaborate with RNF183 to restrain BIK protein levels thus regulating apoptotic signaling. The sequence is that of Fetal and adult testis-expressed transcript protein homolog (Fate1) from Mus musculus (Mouse).